The primary structure comprises 161 residues: MENFIGSHMIYTYENGWEYEIYIKNDHTIDYRIHSGMVAGRWVRDQEVNIVKLTEGVYKVSWTEPTGTDVSLNFMPNEKRMHGIIFFPKWVHEHPEITVCYQNDHIDLMKESREKYETYPKYVVPEFAEITFLKNEGVDNEEVISKAPYEGMTDDIRAGRL.

2 residues coordinate substrate: Tyr-11 and Tyr-13. Tyr-19 serves as the catalytic Proton donor. Arg-41 contacts substrate. Glu-64 acts as the Proton acceptor in catalysis.

Belongs to the PadC family. As to quaternary structure, homodimer.

The enzyme catalyses (E)-4-coumarate + H(+) = 4-vinylphenol + CO2. It catalyses the reaction (E)-cinnamate + H(+) = styrene + CO2. The catalysed reaction is (E)-ferulate + H(+) = 2-methoxy-4-vinylphenol + CO2. Its function is as follows. Involved in the decarboxylation and detoxification of phenolic derivatives. It is able to catalyze the decarboxylation of ferulic, p-coumaric and caffeic acids. The chain is Phenolic acid decarboxylase PadC (padC) from Bacillus subtilis (strain 168).